A 103-amino-acid chain; its full sequence is uncharacterized protein (103 aa).

Transmembrane regions (helical) follow at residues 13-33 (LLPF…YCIL) and 77-97 (FSIY…PYLF).

Its subcellular location is the endoplasmic reticulum membrane. This is an uncharacterized protein from Schizosaccharomyces pombe (strain 972 / ATCC 24843) (Fission yeast).